A 486-amino-acid chain; its full sequence is 3-sulfolactaldehyde dehydrogenase (486 aa).

Residues 157 to 158 (WN), 181 to 184 (RPAS), and 234 to 235 (GS) contribute to the NADP(+) site. Residue glutamate 256 is the Proton acceptor of the active site. Leucine 257 contributes to the NADP(+) binding site. Residue cysteine 290 is the Nucleophile of the active site. Glutamate 387 is an NADP(+) binding site.

Belongs to the aldehyde dehydrogenase family.

The enzyme catalyses (2S)-3-sulfolactaldehyde + NADP(+) + H2O = (2S)-3-sulfolactate + NADPH + 2 H(+). It catalyses the reaction (2S)-3-sulfolactaldehyde + NAD(+) + H2O = (2S)-3-sulfolactate + NADH + 2 H(+). Catalyzes the oxidation of (2S)-3-sulfolactaldehyde to (2S)-3-sulfolactate, using both NAD(+) and NADP(+) as electron acceptors. Is involved in a degradation pathway of sulfoquinovose (SQ) that allows P.putida SQ1 to use SQ as the sole carbon and energy source for growth. The chain is 3-sulfolactaldehyde dehydrogenase from Pseudomonas putida (Arthrobacter siderocapsulatus).